The following is a 254-amino-acid chain: Ribosomal RNA small subunit methyltransferase A (254 aa).

S-adenosyl-L-methionine is bound by residues N12, L14, G38, E59, D83, and N100.

This sequence belongs to the class I-like SAM-binding methyltransferase superfamily. rRNA adenine N(6)-methyltransferase family. RsmA subfamily.

It is found in the cytoplasm. The enzyme catalyses adenosine(1518)/adenosine(1519) in 16S rRNA + 4 S-adenosyl-L-methionine = N(6)-dimethyladenosine(1518)/N(6)-dimethyladenosine(1519) in 16S rRNA + 4 S-adenosyl-L-homocysteine + 4 H(+). In terms of biological role, specifically dimethylates two adjacent adenosines (A1518 and A1519) in the loop of a conserved hairpin near the 3'-end of 16S rRNA in the 30S particle. May play a critical role in biogenesis of 30S subunits. The chain is Ribosomal RNA small subunit methyltransferase A from Mycoplasma mobile (strain ATCC 43663 / 163K / NCTC 11711) (Mesomycoplasma mobile).